Reading from the N-terminus, the 294-residue chain is ATP synthase gamma chain (294 aa).

Belongs to the ATPase gamma chain family. F-type ATPases have 2 components, CF(1) - the catalytic core - and CF(0) - the membrane proton channel. CF(1) has five subunits: alpha(3), beta(3), gamma(1), delta(1), epsilon(1). CF(0) has three main subunits: a, b and c.

Its subcellular location is the cell inner membrane. Produces ATP from ADP in the presence of a proton gradient across the membrane. The gamma chain is believed to be important in regulating ATPase activity and the flow of protons through the CF(0) complex. This chain is ATP synthase gamma chain, found in Rhizobium johnstonii (strain DSM 114642 / LMG 32736 / 3841) (Rhizobium leguminosarum bv. viciae).